Consider the following 65-residue polypeptide: Large ribosomal subunit protein bL35 (65 aa).

The segment at M1–Q26 is disordered. Residues A10–Q26 show a composition bias toward basic residues.

The protein belongs to the bacterial ribosomal protein bL35 family.

The protein is Large ribosomal subunit protein bL35 of Actinobacillus pleuropneumoniae serotype 7 (strain AP76).